We begin with the raw amino-acid sequence, 434 residues long: Glutamate-1-semialdehyde 2,1-aminomutase (434 aa).

The residue at position 273 (lysine 273) is an N6-(pyridoxal phosphate)lysine.

The protein belongs to the class-III pyridoxal-phosphate-dependent aminotransferase family. HemL subfamily. As to quaternary structure, homodimer. It depends on pyridoxal 5'-phosphate as a cofactor.

The protein resides in the cytoplasm. The enzyme catalyses (S)-4-amino-5-oxopentanoate = 5-aminolevulinate. It functions in the pathway porphyrin-containing compound metabolism; protoporphyrin-IX biosynthesis; 5-aminolevulinate from L-glutamyl-tRNA(Glu): step 2/2. The protein is Glutamate-1-semialdehyde 2,1-aminomutase of Polynucleobacter asymbioticus (strain DSM 18221 / CIP 109841 / QLW-P1DMWA-1) (Polynucleobacter necessarius subsp. asymbioticus).